The chain runs to 44 residues: Photosystem I reaction center subunit IX (44 aa).

A helical transmembrane segment spans residues 7–27 (YLSVAPVVSTLWFAALAGLLI).

The protein belongs to the PsaJ family.

It localises to the plastid. The protein resides in the chloroplast thylakoid membrane. In terms of biological role, may help in the organization of the PsaE and PsaF subunits. This Lotus japonicus (Lotus corniculatus var. japonicus) protein is Photosystem I reaction center subunit IX.